The primary structure comprises 869 residues: MTDTPAERPDPGVAGDADWAAQARPLLVHVDMRLCKRFDQGEPIERLVALRARAVDQLMRNAWMRCIPADSGLSLHAVGGYGRGELFPRSDVDVLVLGDTAAQQQHEQALARLFALLWDVGLPISHAVRSPAQCTAAAADQTVLTALIESRALVADAQARAALATAIAPPQVWPPRDFFQAKREELLARHQRFGDTADNLEPDIKDGPGGLRDLQTLGWMALRAFGVKDLEALVGLGHVGFDEAAALRREREELARLRFGLHIVANRPEERLRFDYQKTLAERLGFADDPESLGVEKMMQRFYRSAALIRRISDRLLQRFEEQFDGEATPEPLGGGFSLRRGYLAADTESWPDGDVLQVFALFAQWAAHREVRGLHSLTARALAEVLRDLPAYEVADATARERFMALLRGPRAVETLNRMARLGVLGQWIPAFASVSGRMQFDLFHVYTVDQHTLMVLRNIALFAAGRADEHFSIAHEVWPRLRKPELLLLAGLFHDIAKGRGGDHSELGAVDARAFCLAHRLSEGDTELVTWLVEQHLRMSVTAQKQDISDPEVIHRFATLVGTRERLDYLYLLTCADIAGTSPKLWNAWKDRLLADLYFAARRALREGLEHPPPREERLREARESARTLMQAQGHDDVTIDRQFAGMPDENFLRFRPEQLAWQAASLIEVEIGQTLVKARRAVPDNDALEVFVYSPDRDGLFAAIVATLDRKGYGIHRARVLDAPHDAIFDVFEVLPQETYADGDPQRLAATLRQVLAGDLQKVRPARRAVPRQLRHFRFAPRVEFSESAGGRRTRISLVAPDRPGLLADVAHVLRMQHLRVHDARIATFGERAEDQFQITDEHDRPLSESARQALRDALCACLDPV.

Residues 1–332 are uridylyltransferase; it reads MTDTPAERPD…QFDGEATPEP (332 aa). Positions 333 to 691 are uridylyl-removing; the sequence is LGGGFSLRRG…RRAVPDNDAL (359 aa). Residues 450–572 enclose the HD domain; that stretch reads VDQHTLMVLR…VGTRERLDYL (123 aa). 2 ACT domains span residues 692 to 774 and 798 to 869; these read EVFV…RAVP and RISL…LDPV.

It belongs to the GlnD family. Requires Mg(2+) as cofactor.

The enzyme catalyses [protein-PII]-L-tyrosine + UTP = [protein-PII]-uridylyl-L-tyrosine + diphosphate. The catalysed reaction is [protein-PII]-uridylyl-L-tyrosine + H2O = [protein-PII]-L-tyrosine + UMP + H(+). Uridylyltransferase (UTase) activity is inhibited by glutamine, while glutamine activates uridylyl-removing (UR) activity. Its function is as follows. Modifies, by uridylylation and deuridylylation, the PII regulatory proteins (GlnB and homologs), in response to the nitrogen status of the cell that GlnD senses through the glutamine level. Under low glutamine levels, catalyzes the conversion of the PII proteins and UTP to PII-UMP and PPi, while under higher glutamine levels, GlnD hydrolyzes PII-UMP to PII and UMP (deuridylylation). Thus, controls uridylylation state and activity of the PII proteins, and plays an important role in the regulation of nitrogen assimilation and metabolism. The chain is Bifunctional uridylyltransferase/uridylyl-removing enzyme from Xanthomonas axonopodis pv. citri (strain 306).